Here is a 176-residue protein sequence, read N- to C-terminus: Flavodoxin 1 (176 aa).

The 162-residue stretch at Thr4–Ser165 folds into the Flavodoxin-like domain.

Belongs to the flavodoxin family. It depends on FMN as a cofactor.

In terms of biological role, low-potential electron donor to a number of redox enzymes (Potential). Involved in the reactivation of inactive cob(II)alamin in methionine synthase. This chain is Flavodoxin 1 (fldA), found in Salmonella typhimurium (strain LT2 / SGSC1412 / ATCC 700720).